The chain runs to 1393 residues: MRDLLKIHKLEQKEQDFDAIRVGLASPEKIRSWSYGEVKKPETINYRTFKPEREGLFCAKVFGPMKDFECLCGKYKRMKFRNVVCEKCGVEVTYSKVRRERMGHIELAAPVAHIWYLKSLPSRLGLLMDMTLKDIERVLYFEAFLVTDPGSTPLVHKQLLTEEMYFDALDEYGDDEFEAKMGAEAIQDVLSDMKLEVEAANLREDSLNTKSQTKLKKYNKRLKLVNSLIQSGNKPEWMVLKVLPILPSDLRPLVPLDGGRFATSDLNDLYRRVINRNNRLARLLELDAPEIIVRNEKRMLQEAVDSLIDNGRRGRAVMGNNRRPLKSISDMIKGKQGRFRQNLLGKRVDYSGRSVIVCGPYLKLHQCGLPKKMALELFKPFIYNRLQTKGLASTIKAAKKMVESESPEVWDILERVVHQHPVLLNRAPTLHRLGIQAFEPLLIEGKAIQLHPLVCGAFNADFDGDQMAVHVPLSEEAQLEARTLMLASNNVLHLASGEPIIVPSQDVILGLYYMTREMINQKGEGLIFVNATEALNAYESDSVTLHAKVKLRIQDYHKVNGKFEPSAKRIVDTTVGRAIFSRILPNGLSFNLINEAISKKVVSNLIHVCYRTQELKQTVMFADQMMYMGFQYSTKSGISFCSNDMIIPDSKAKMIEQAEIQVKDIQEQFSKGVVTDGERYNKVIDIWSRTSEKVAKAMMDEIGFENFTDVDGKIQKLASFNSVYMMADSGARGSPAQMRQLSGMRGLMAKPDGSIIETPITSNFREGLNNMQYFISTHGARKGLADTALKTANSGYLTRRLVDVGQDLVITENDCGTDNGLIMKAVIDGGNIVQTLGTATLGRVTAEDVLMPDSIEIFLEKGHLVSLDDSDKINELGIESIKVRSSITCDTRYGVCSSCYGNDMARGHKIGVGEAIGVIAAQSIGEPGTQLTMRTFHIGGAASASTAVSSINVNTDGIAHFENLKSITNENNDLVVISRSSEVTIRNNKGQEVERYKIPYGAIVHVQEGGAVTAKDKISDWDPHTHPIISEQAGRVIFVDFVEGMTVNKNTDPLTGLTFFEMIDEAERSTAAKGLKPLIKMVEENDSEVVLSTHYLPSTVKINLDDNQVIAAGGVLAKIPKDLSKTSDITGGLPRVADLFEARKAKDHSILAEATGVISFGNSTKSKDRLIITSSEGKATEMMIHKWSQINVFDGETIEKGDVISDGPSNPHDILRLLGVEALANYVVREVQNVYRLQGVNISDKHIEVIVKQMLRKVEILDAGDSSFVNGETAEYGRVIEMNYQLEAQGKDLINYQRLLMGITKASLATESFISAASFQETTRVLTEASTTGRVDTLQGLKENVIVGRLIPAGTGFKHHQVRRAQYVESITTQTVDAQQALSDQLKEAEEQT.

Zn(2+) contacts are provided by Cys-70, Cys-72, Cys-85, and Cys-88. Mg(2+)-binding residues include Asp-461, Asp-463, and Asp-465. The Zn(2+) site is built by Cys-815, Cys-889, Cys-896, and Cys-899.

Belongs to the RNA polymerase beta' chain family. In terms of assembly, the RNAP catalytic core consists of 2 alpha, 1 beta, 1 beta' and 1 omega subunit. When a sigma factor is associated with the core the holoenzyme is formed, which can initiate transcription. The cofactor is Mg(2+). Zn(2+) serves as cofactor.

It catalyses the reaction RNA(n) + a ribonucleoside 5'-triphosphate = RNA(n+1) + diphosphate. Its function is as follows. DNA-dependent RNA polymerase catalyzes the transcription of DNA into RNA using the four ribonucleoside triphosphates as substrates. The sequence is that of DNA-directed RNA polymerase subunit beta' from Vesicomyosocius okutanii subsp. Calyptogena okutanii (strain HA).